Reading from the N-terminus, the 245-residue chain is tRNA1(Val) (adenine(37)-N6)-methyltransferase (245 aa).

This sequence belongs to the methyltransferase superfamily. tRNA (adenine-N(6)-)-methyltransferase family.

The protein localises to the cytoplasm. It catalyses the reaction adenosine(37) in tRNA1(Val) + S-adenosyl-L-methionine = N(6)-methyladenosine(37) in tRNA1(Val) + S-adenosyl-L-homocysteine + H(+). Its function is as follows. Specifically methylates the adenine in position 37 of tRNA(1)(Val) (anticodon cmo5UAC). This is tRNA1(Val) (adenine(37)-N6)-methyltransferase from Escherichia coli O139:H28 (strain E24377A / ETEC).